The primary structure comprises 93 residues: Integration host factor subunit beta (93 aa).

This sequence belongs to the bacterial histone-like protein family. As to quaternary structure, heterodimer of an alpha and a beta chain.

This protein is one of the two subunits of integration host factor, a specific DNA-binding protein that functions in genetic recombination as well as in transcriptional and translational control. The sequence is that of Integration host factor subunit beta from Actinobacillus pleuropneumoniae serotype 7 (strain AP76).